A 367-amino-acid polypeptide reads, in one-letter code: Peptide chain release factor 1 (367 aa).

Gln243 carries the N5-methylglutamine modification.

The protein belongs to the prokaryotic/mitochondrial release factor family. Post-translationally, methylated by PrmC. Methylation increases the termination efficiency of RF1.

The protein resides in the cytoplasm. Its function is as follows. Peptide chain release factor 1 directs the termination of translation in response to the peptide chain termination codons UAG and UAA. This is Peptide chain release factor 1 from Acidovorax sp. (strain JS42).